We begin with the raw amino-acid sequence, 705 residues long: MVRATPIHRYRNIGIMAHIDAGKTTTSERILFYAGVCHQMGEVHDGAAVMDWMEQEQERGITITSAATTVFWSGMDKSMPQHRFNIIDTPGHVDFTIEVERSLRVLDGAVFVLCAVGGVQPQSETVWRQANKYFVPRMAFVNKMDRTGANFDKVVEQLKARLGAYPVPMQVPIGAEDGFEGVIDLLKMKAIHWDAASQGTVFEYRDIPIELVDKASKARAFMVEAAAEATEELMDKYLNEGELKEQEILQGLRERTLKVEIIPVFCGSAFKNKGVQAMLDGVIHLLPSPADRPPVQGLDEKGNECRCKASDSEPFSALAFKIMTDPFVGSLTFFRVYSGVLNSGDQVYNSVKLKKERVGRILQMHSNQRDEIKEVRAGDIAAAVGLKDVTTGDTLCDQNHIITLERMIFPEPVISMAVEPKTKSDQEKMGMALGRLAQEDPSFRVKTDEESGQTIISGMGELHLDIIVDRMRREFNVEANVGKPQVAYRETIRKSDVKSDYKHVKQSGGKGQYGHVVIEISPMSDVDKQHPDVKGDFLFINEITGGVIPKEFISPIEKGLRETITSGPLAGFPVVGVKVKLVFGSYHDVDSSEMAFKLAASMAFKQGFAKANPVLLEPIMKVEIVSPEDYLGDIMGDVSRRRGVLQGQDDSLSGKVINAMIPLGEMFGYATSLRSMTQGRATFAMEFDHYEEAPANIADTVIKKT.

A tr-type G domain is found at 8-290 (HRYRNIGIMA…GVIHLLPSPA (283 aa)). Residues 17–24 (AHIDAGKT), 88–92 (DTPGH), and 142–145 (NKMD) contribute to the GTP site.

Belongs to the TRAFAC class translation factor GTPase superfamily. Classic translation factor GTPase family. EF-G/EF-2 subfamily.

It is found in the cytoplasm. Its function is as follows. Catalyzes the GTP-dependent ribosomal translocation step during translation elongation. During this step, the ribosome changes from the pre-translocational (PRE) to the post-translocational (POST) state as the newly formed A-site-bound peptidyl-tRNA and P-site-bound deacylated tRNA move to the P and E sites, respectively. Catalyzes the coordinated movement of the two tRNA molecules, the mRNA and conformational changes in the ribosome. In Xylella fastidiosa (strain 9a5c), this protein is Elongation factor G.